The sequence spans 139 residues: Protein GOS9 (139 aa).

The Jacalin-type lectin domain occupies 5-139 (LVKIGTWGGN…VDSIGVYVHI (135 aa)).

In terms of tissue distribution, expressed mainly in roots.

This is Protein GOS9 (GOS9) from Oryza sativa subsp. indica (Rice).